We begin with the raw amino-acid sequence, 337 residues long: MSQQFNVAIFGATGAVGETMLEVLQEREFPVDELFLLASERSEGKTYRFNGKTVRVQNVEEFDWSQVHIALFSAGGELSAKWAPIAAEAGVVVIDNTSHFRYDYDIPLVVPEVNPEAIAEFRNRNIIANPNCSTIQMLVALKPIYDAVGIERINVTTYQSVSGAGKAGIDELAGQTAKLLNGYPAETNTFSQQIAFNCIPQIDQFMDNGYTKEEMKMVWETQKIFNDPSIMVNPTCVRVPVFYGHAEAVHVETRAPIDAEQVMDMLEQTDGIELFRGADFPTQVRDAGGKDHVLVGRVRNDISHHSGINLWVVADNVRKGAATNAVQIAELLVRDYF.

NADP(+) is bound by residues 13 to 16 (TGAV) and 41 to 42 (RS). R101 lines the phosphate pocket. The active-site Acyl-thioester intermediate is the C132. Q159 lines the substrate pocket. Position 162 to 163 (162 to 163 (SG)) interacts with NADP(+). K216 is a phosphate binding site. R238 contacts substrate. H245 (proton acceptor) is an active-site residue. N316 contacts NADP(+).

This sequence belongs to the aspartate-semialdehyde dehydrogenase family. Homodimer.

It carries out the reaction L-aspartate 4-semialdehyde + phosphate + NADP(+) = 4-phospho-L-aspartate + NADPH + H(+). It functions in the pathway amino-acid biosynthesis; L-lysine biosynthesis via DAP pathway; (S)-tetrahydrodipicolinate from L-aspartate: step 2/4. Its pathway is amino-acid biosynthesis; L-methionine biosynthesis via de novo pathway; L-homoserine from L-aspartate: step 2/3. The protein operates within amino-acid biosynthesis; L-threonine biosynthesis; L-threonine from L-aspartate: step 2/5. Its function is as follows. Catalyzes the NADPH-dependent formation of L-aspartate-semialdehyde (L-ASA) by the reductive dephosphorylation of L-aspartyl-4-phosphate. This is Aspartate-semialdehyde dehydrogenase 2 (asd2) from Vibrio cholerae serotype O1 (strain ATCC 39315 / El Tor Inaba N16961).